The following is a 227-amino-acid chain: Cytidylate kinase (227 aa).

12–20 (GPSGAGKGT) lines the ATP pocket.

It belongs to the cytidylate kinase family. Type 1 subfamily.

The protein resides in the cytoplasm. The catalysed reaction is CMP + ATP = CDP + ADP. It carries out the reaction dCMP + ATP = dCDP + ADP. This chain is Cytidylate kinase, found in Sodalis glossinidius (strain morsitans).